The primary structure comprises 417 residues: Gamma-glutamyl phosphate reductase (417 aa).

The protein belongs to the gamma-glutamyl phosphate reductase family.

The protein localises to the cytoplasm. The enzyme catalyses L-glutamate 5-semialdehyde + phosphate + NADP(+) = L-glutamyl 5-phosphate + NADPH + H(+). It participates in amino-acid biosynthesis; L-proline biosynthesis; L-glutamate 5-semialdehyde from L-glutamate: step 2/2. In terms of biological role, catalyzes the NADPH-dependent reduction of L-glutamate 5-phosphate into L-glutamate 5-semialdehyde and phosphate. The product spontaneously undergoes cyclization to form 1-pyrroline-5-carboxylate. The polypeptide is Gamma-glutamyl phosphate reductase (Meiothermus ruber).